Consider the following 199-residue polypeptide: NAD(P)H dehydrogenase (quinone) 1 (199 aa).

The region spanning 4 to 190 is the Flavodoxin-like domain; sequence VLVLYYSAYG…EAARFQGAHV (187 aa). Residues 10–15 and 78–80 each bind FMN; these read SAYGHI and TRY. Tyr-12 is an NAD(+) binding site. Trp-98 contributes to the substrate binding site. FMN contacts are provided by residues 113-119 and His-134; that span reads SSATQHG.

It belongs to the WrbA family. FMN is required as a cofactor.

The enzyme catalyses a quinone + NADH + H(+) = a quinol + NAD(+). The catalysed reaction is a quinone + NADPH + H(+) = a quinol + NADP(+). This chain is NAD(P)H dehydrogenase (quinone) 1, found in Rhizobium meliloti (strain 1021) (Ensifer meliloti).